An 82-amino-acid chain; its full sequence is uncharacterized protein (82 aa).

Helical transmembrane passes span 29-49 (LMNA…GIII) and 55-75 (WSLP…LTFF).

It is found in the cell membrane. This is an uncharacterized protein from Escherichia coli (strain K12).